The following is a 296-amino-acid chain: Ribosomal RNA small subunit methyltransferase A (296 aa).

Residues N28, L30, G55, E77, D103, and N122 each coordinate S-adenosyl-L-methionine.

This sequence belongs to the class I-like SAM-binding methyltransferase superfamily. rRNA adenine N(6)-methyltransferase family. RsmA subfamily.

It localises to the cytoplasm. The catalysed reaction is adenosine(1518)/adenosine(1519) in 16S rRNA + 4 S-adenosyl-L-methionine = N(6)-dimethyladenosine(1518)/N(6)-dimethyladenosine(1519) in 16S rRNA + 4 S-adenosyl-L-homocysteine + 4 H(+). Specifically dimethylates two adjacent adenosines (A1518 and A1519) in the loop of a conserved hairpin near the 3'-end of 16S rRNA in the 30S particle. May play a critical role in biogenesis of 30S subunits. This chain is Ribosomal RNA small subunit methyltransferase A, found in Sinorhizobium fredii (strain NBRC 101917 / NGR234).